The following is a 266-amino-acid chain: 3-methyl-2-oxobutanoate hydroxymethyltransferase 2 (266 aa).

Asp-45 and Asp-84 together coordinate Mg(2+). 3-methyl-2-oxobutanoate is bound by residues 45–46 (DS), Asp-84, and Lys-112. Residue Glu-114 participates in Mg(2+) binding. The active-site Proton acceptor is the Glu-181.

This sequence belongs to the PanB family. In terms of assembly, homodecamer; pentamer of dimers. Mg(2+) serves as cofactor.

It is found in the cytoplasm. The catalysed reaction is 3-methyl-2-oxobutanoate + (6R)-5,10-methylene-5,6,7,8-tetrahydrofolate + H2O = 2-dehydropantoate + (6S)-5,6,7,8-tetrahydrofolate. It functions in the pathway cofactor biosynthesis; (R)-pantothenate biosynthesis; (R)-pantoate from 3-methyl-2-oxobutanoate: step 1/2. Catalyzes the reversible reaction in which hydroxymethyl group from 5,10-methylenetetrahydrofolate is transferred onto alpha-ketoisovalerate to form ketopantoate. This chain is 3-methyl-2-oxobutanoate hydroxymethyltransferase 2, found in Pseudomonas aeruginosa (strain UCBPP-PA14).